The following is a 315-amino-acid chain: Large ribosomal subunit protein uL10 (315 aa).

The segment covering 285–294 (AAAPAASAAP) has biased composition (low complexity). Residues 285–315 (AAAPAASAAPAKEEKEESEESDDDMGFGLFD) form a disordered region. The span at 300 to 309 (EESEESDDDM) shows a compositional bias: acidic residues.

Belongs to the universal ribosomal protein uL10 family. In terms of assembly, P0 forms a pentameric complex by interaction with dimers of P1 and P2. Post-translationally, phosphorylated.

Functionally, ribosomal protein P0 is the functional equivalent of E.coli protein L10. The chain is Large ribosomal subunit protein uL10 (RPLP0) from Lithobates sylvaticus (Wood frog).